The primary structure comprises 413 residues: Type IV pilus assembly protein TapC (413 aa).

4 helical membrane passes run 180-200, 227-247, 286-306, and 386-406; these read YPAM…LFVI, FMQH…FLYV, LSTT…AAGA, and IMVV…LPIF.

This sequence belongs to the GSP F family.

It localises to the cell inner membrane. Its function is as follows. Involved in the translocation of the type IV pilin. The sequence is that of Type IV pilus assembly protein TapC (tapC) from Aeromonas hydrophila.